Here is a 253-residue protein sequence, read N- to C-terminus: UPF0246 protein lhv_1883 (253 aa).

The protein belongs to the UPF0246 family.

This chain is UPF0246 protein lhv_1883, found in Lactobacillus helveticus (strain DPC 4571).